We begin with the raw amino-acid sequence, 462 residues long: Elongation factor 1-alpha (462 aa).

Position 2 is a blocked amino end (Gly) (glycine 2). The 238-residue stretch at 5–242 (KIHINIVVIG…DAILPPSRPT (238 aa)) folds into the tr-type G domain. Residues 14 to 21 (GHVDSGKS) are G1. Residue 14-21 (GHVDSGKS) coordinates GTP. Lysine 36 carries the N6,N6,N6-trimethyllysine modification. N6-methyllysine is present on lysine 55. Residues 70–74 (GITID) are G2. Lysine 79 is modified (N6,N6,N6-trimethyllysine). Residues 91 to 94 (DAPG) are G3. Residues 91–95 (DAPGH) and 153–156 (NKMD) contribute to the GTP site. The segment at 153–156 (NKMD) is G4. Positions 194-196 (SGW) are G5. N6,N6,N6-trimethyllysine is present on residues lysine 219 and lysine 318. Residue glutamate 374 is modified to 5-glutamyl glycerylphosphorylethanolamine.

Belongs to the TRAFAC class translation factor GTPase superfamily. Classic translation factor GTPase family. EF-Tu/EF-1A subfamily. The N-terminus is blocked.

It localises to the cytoplasm. This protein promotes the GTP-dependent binding of aminoacyl-tRNA to the A-site of ribosomes during protein biosynthesis. The chain is Elongation factor 1-alpha from Artemia salina (Brine shrimp).